Reading from the N-terminus, the 430-residue chain is Glutamate-1-semialdehyde 2,1-aminomutase (430 aa).

K270 bears the N6-(pyridoxal phosphate)lysine mark.

This sequence belongs to the class-III pyridoxal-phosphate-dependent aminotransferase family. HemL subfamily. As to quaternary structure, homodimer. The cofactor is pyridoxal 5'-phosphate.

Its subcellular location is the cytoplasm. The enzyme catalyses (S)-4-amino-5-oxopentanoate = 5-aminolevulinate. It functions in the pathway porphyrin-containing compound metabolism; protoporphyrin-IX biosynthesis; 5-aminolevulinate from L-glutamyl-tRNA(Glu): step 2/2. This is Glutamate-1-semialdehyde 2,1-aminomutase from Cupriavidus necator (strain ATCC 17699 / DSM 428 / KCTC 22496 / NCIMB 10442 / H16 / Stanier 337) (Ralstonia eutropha).